Consider the following 470-residue polypeptide: Pyruvate kinase I (470 aa).

Position 32 (R32) interacts with substrate. K(+) is bound by residues N34, S36, D66, and T67. 34 to 37 is an ATP binding site; sequence NFSH. Residues R73 and K156 each contribute to the ATP site. E222 is a Mg(2+) binding site. Positions 245, 246, and 278 each coordinate substrate. D246 is a binding site for Mg(2+).

The protein belongs to the pyruvate kinase family. In terms of assembly, homotetramer. Requires Mg(2+) as cofactor. The cofactor is K(+).

The catalysed reaction is pyruvate + ATP = phosphoenolpyruvate + ADP + H(+). It participates in carbohydrate degradation; glycolysis; pyruvate from D-glyceraldehyde 3-phosphate: step 5/5. In Salmonella typhi, this protein is Pyruvate kinase I (pykF).